The sequence spans 815 residues: MFMSSSSSSHARRPQLSSFSYLHPPLPFPGLSFFNTRDKRVNFDSTRIICIAKSKPARTTPEYSDVLQTGLPLIVEDDIQEQEEPLEVSLENQIRQGVDIVKSMLGSMEDGETSISAYDTAWVALVENIHHPGSPQFPSSLQWIANNQLPDGSWGDPDVFLAHDRLINTLACVIALKKWNIHPHKCKRGLSFVKENISKLEKENEEHMLIGFEIAFPSLLEMAKKLGIEIPDDSPALQDIYTKRDLKLTRIPKDIMHNVPTTLLYSLEGLPSLDWEKLVKLQCTDGSFLFSPSSTAFALMHTKDGNCFSYINNLVHKFNGGVPTVYPVDLFEHIWCVDRLQRLGISRFFHPEIKECLGYVHRYWTKDGICWARNSRVQDIDDTAMGFRLLRLHGYEVSPDVFKQFRKGDEFVCFMGQSNQAITGIYNLYRASQMMFPEETILEEAKKFSVNFLREKRAASELLDKWIITKDLPGEVGFALDVPWYACLPRVETRLYIEQYGGQDDVWIGKTLYRMPYVNNNVYLELAKLDYNNCQSLHRIEWDNIQKWYEGYNLGGFGVNKRSLLRTYFLATSNIFEPERSVERLTWAKTVILVQAIASYFENSREERIEFANEFQKFLNTRGYINGRRLDVKQATKGLIEMVFATLNQFSLDALVVHGEDITHHLYQSWEKWVLTWQEGGDRREGEAELLVQTINLMAGHTHSQEEELYERLFKLTNTVCHQLGHYHHLNKDKQPQQVEDNGGYNNSNPESISKLQIESDMRELVQLVLNSSDGMDSNIKQTFLTVTKSFYYTAFTHPGTVNYHIAKVLFERVV.

The transit peptide at 1-51 directs the protein to the chloroplast; sequence MFMSSSSSSHARRPQLSSFSYLHPPLPFPGLSFFNTRDKRVNFDSTRIICI. Position 247 (K247) interacts with substrate. Positions 379 and 381 each coordinate Mg(2+). The short motif at 379–382 is the DXDD motif element; sequence DIDD. Residue K465 coordinates substrate.

The protein belongs to the terpene synthase family. Tpsc subfamily. Mg(2+) serves as cofactor.

It is found in the plastid. The protein localises to the chloroplast. The catalysed reaction is (2E,6E,10E)-geranylgeranyl diphosphate = (-)-kolavenyl diphosphate. Inhibited by high concentrations of magnesium. Diterpene synthase that catalyzes the formation of (-)-kolavenyl diphosphate from geranylgeranyl diphosphate (GGPP). The chain is (-)-kolavenyl diphosphate synthase TPS28, chloroplastic from Tripterygium wilfordii (Thunder God vine).